A 252-amino-acid chain; its full sequence is Imidazole glycerol phosphate synthase subunit HisF (252 aa).

Catalysis depends on residues Asp-11 and Asp-130.

Belongs to the HisA/HisF family. In terms of assembly, heterodimer of HisH and HisF.

It localises to the cytoplasm. It catalyses the reaction 5-[(5-phospho-1-deoxy-D-ribulos-1-ylimino)methylamino]-1-(5-phospho-beta-D-ribosyl)imidazole-4-carboxamide + L-glutamine = D-erythro-1-(imidazol-4-yl)glycerol 3-phosphate + 5-amino-1-(5-phospho-beta-D-ribosyl)imidazole-4-carboxamide + L-glutamate + H(+). Its pathway is amino-acid biosynthesis; L-histidine biosynthesis; L-histidine from 5-phospho-alpha-D-ribose 1-diphosphate: step 5/9. In terms of biological role, IGPS catalyzes the conversion of PRFAR and glutamine to IGP, AICAR and glutamate. The HisF subunit catalyzes the cyclization activity that produces IGP and AICAR from PRFAR using the ammonia provided by the HisH subunit. In Bacillus cereus (strain G9842), this protein is Imidazole glycerol phosphate synthase subunit HisF.